The chain runs to 233 residues: Adenosine 5'-phosphosulfate reductase (233 aa).

The [4Fe-4S] cluster site is built by cysteine 120, cysteine 121, cysteine 203, and cysteine 206. Catalysis depends on cysteine 229, which acts as the Nucleophile; cysteine thiosulfonate intermediate.

Belongs to the PAPS reductase family. CysH subfamily. The cofactor is [4Fe-4S] cluster.

The protein resides in the cytoplasm. It catalyses the reaction [thioredoxin]-disulfide + sulfite + AMP + 2 H(+) = adenosine 5'-phosphosulfate + [thioredoxin]-dithiol. The protein operates within sulfur metabolism; hydrogen sulfide biosynthesis; sulfite from sulfate. Catalyzes the formation of sulfite from adenosine 5'-phosphosulfate (APS) using thioredoxin as an electron donor. The sequence is that of Adenosine 5'-phosphosulfate reductase from Bacillus pumilus (strain SAFR-032).